The primary structure comprises 357 residues: F-box only protein 25 (357 aa).

The interaction with beta-actin stretch occupies residues 1–83 (MPFLGQDWRS…NDTNTQCFYR (83 aa)). An F-box domain is found at 225-273 (LTLSDLPVHMLSNILYRFSDGWDIVTLGQVTPTLSALSEDRQLWKKLCQ).

In terms of assembly, part of a SCF (SKP1-cullin-F-box) protein ligase complex consisting of FBXO25, SKP1, CUL1 and RBX1. Interacts directly with SKP1 and CUL1. Interacts (via C-terminus) with beta-actin (via N-terminus).

The protein localises to the nucleus. It functions in the pathway protein modification; protein ubiquitination. Substrate-recognition component of the SCF (SKP1-CUL1-F-box protein)-type E3 ubiquitin ligase complex. May play a role in accumulation of expanded polyglutamine (polyQ) protein huntingtin (HTT). The polypeptide is F-box only protein 25 (FBXO25) (Bos taurus (Bovine)).